The primary structure comprises 158 residues: Transcriptional regulator MraZ (158 aa).

2 SpoVT-AbrB domains span residues 7-57 (THQN…PTAA) and 86-129 (AYPV…EPAA). Positions 133–158 (RRAEARTRSRQLALPAQGRRQGGADA) are disordered.

It belongs to the MraZ family. In terms of assembly, forms oligomers.

Its subcellular location is the cytoplasm. The protein localises to the nucleoid. This chain is Transcriptional regulator MraZ, found in Gluconacetobacter diazotrophicus (strain ATCC 49037 / DSM 5601 / CCUG 37298 / CIP 103539 / LMG 7603 / PAl5).